Consider the following 570-residue polypeptide: Dual specificity testis-specific protein kinase 2 (570 aa).

Residues 58–313 (DFTREKIGSG…EIGKTLKEIM (256 aa)) enclose the Protein kinase domain. Residues 64-72 (IGSGFFSEV) and K87 each bind ATP. D176 functions as the Proton acceptor in the catalytic mechanism. S219 is subject to Phosphoserine; by autocatalysis. Positions 316–327 (LPEEELERDRKL) are enriched in basic and acidic residues. The tract at residues 316–357 (LPEEELERDRKLQPTAKGPLEKVPGGKRLSSLDDKIPHKSPR) is disordered. A phosphoserine mark is found at S369, S456, and S460. The interval 511-530 (AMDCSNPQEENGFGPRLKGT) is disordered.

This sequence belongs to the protein kinase superfamily. TKL Ser/Thr protein kinase family. Requires Mg(2+) as cofactor. It depends on Mn(2+) as a cofactor.

It is found in the nucleus. It catalyses the reaction L-seryl-[protein] + ATP = O-phospho-L-seryl-[protein] + ADP + H(+). It carries out the reaction L-threonyl-[protein] + ATP = O-phospho-L-threonyl-[protein] + ADP + H(+). The catalysed reaction is L-tyrosyl-[protein] + ATP = O-phospho-L-tyrosyl-[protein] + ADP + H(+). Its activity is regulated as follows. Activated by autophosphorylation on Ser-219. Its function is as follows. Dual specificity protein kinase activity catalyzing autophosphorylation and phosphorylation of exogenous substrates on both serine/threonine and tyrosine residues. Phosphorylates cofilin at 'Ser-3'. May play an important role in spermatogenesis. The polypeptide is Dual specificity testis-specific protein kinase 2 (Tesk2) (Mus musculus (Mouse)).